We begin with the raw amino-acid sequence, 472 residues long: Ribosomal protein uS12 methylthiotransferase RimO (472 aa).

The 111-residue stretch at 33 to 143 (NRIGFVSLGC…VLKHVHKYVP (111 aa)) folds into the MTTase N-terminal domain. [4Fe-4S] cluster-binding residues include Cys-42, Cys-78, Cys-107, Cys-175, Cys-179, and Cys-182. The Radical SAM core domain occupies 161–398 (LTPKHYAYLK…MELQAEISAE (238 aa)). The region spanning 401–467 (ARFVGRTLDI…EHDLWAEVVD (67 aa)) is the TRAM domain.

The protein belongs to the methylthiotransferase family. RimO subfamily. [4Fe-4S] cluster serves as cofactor.

The protein localises to the cytoplasm. It catalyses the reaction L-aspartate(89)-[ribosomal protein uS12]-hydrogen + (sulfur carrier)-SH + AH2 + 2 S-adenosyl-L-methionine = 3-methylsulfanyl-L-aspartate(89)-[ribosomal protein uS12]-hydrogen + (sulfur carrier)-H + 5'-deoxyadenosine + L-methionine + A + S-adenosyl-L-homocysteine + 2 H(+). Its function is as follows. Catalyzes the methylthiolation of an aspartic acid residue of ribosomal protein uS12. The sequence is that of Ribosomal protein uS12 methylthiotransferase RimO from Shewanella putrefaciens (strain CN-32 / ATCC BAA-453).